A 203-amino-acid chain; its full sequence is Endo-type membrane-bound lytic murein transglycosylase A (203 aa).

An N-terminal signal peptide occupies residues 1-15 (MKLRWFAFLIVLLAG). C16 carries the N-palmitoyl cysteine lipid modification. C16 carries the S-diacylglycerol cysteine lipid modification.

It belongs to the transglycosylase Slt family.

It localises to the cell outer membrane. The enzyme catalyses Endolytic cleavage of the (1-&gt;4)-beta-glycosidic linkage between N-acetylmuramic acid (MurNAc) and N-acetylglucosamine (GlcNAc) residues in peptidoglycan with concomitant formation of a 1,6-anhydrobond in the MurNAc residue.. Its function is as follows. Murein-degrading enzyme. May play a role in recycling of muropeptides during cell elongation and/or cell division. Preferentially cleaves at a distance of more than two disaccharide units from the ends of the glycan chain. This chain is Endo-type membrane-bound lytic murein transglycosylase A, found in Escherichia coli (strain K12 / MC4100 / BW2952).